Consider the following 485-residue polypeptide: UDP-N-acetylmuramate--L-alanine ligase (485 aa).

Residue 125-131 (GTHGKTT) coordinates ATP.

The protein belongs to the MurCDEF family.

It is found in the cytoplasm. It catalyses the reaction UDP-N-acetyl-alpha-D-muramate + L-alanine + ATP = UDP-N-acetyl-alpha-D-muramoyl-L-alanine + ADP + phosphate + H(+). Its pathway is cell wall biogenesis; peptidoglycan biosynthesis. In terms of biological role, cell wall formation. This chain is UDP-N-acetylmuramate--L-alanine ligase, found in Stutzerimonas stutzeri (strain A1501) (Pseudomonas stutzeri).